A 213-amino-acid polypeptide reads, in one-letter code: Glutathione S-transferase APIC (213 aa).

One can recognise a GST N-terminal domain in the interval Met-1–Gly-82. Glutathione is bound by residues Ser-11, Thr-12–Ala-13, His-40–Lys-41, Gln-53–Val-54, and Glu-66–Ser-67. In terms of domain architecture, GST C-terminal spans Asp-89 to Lys-213.

This sequence belongs to the GST superfamily. Phi family.

The enzyme catalyses RX + glutathione = an S-substituted glutathione + a halide anion + H(+). In terms of biological role, conjugation of reduced glutathione to a wide number of exogenous and endogenous hydrophobic electrophiles. In Nicotiana tabacum (Common tobacco), this protein is Glutathione S-transferase APIC.